A 190-amino-acid polypeptide reads, in one-letter code: ATP synthase subunit b (190 aa).

The helical transmembrane segment at Ile4–Ala24 threads the bilayer.

Belongs to the ATPase B chain family. In terms of assembly, F-type ATPases have 2 components, F(1) - the catalytic core - and F(0) - the membrane proton channel. F(1) has five subunits: alpha(3), beta(3), gamma(1), delta(1), epsilon(1). F(0) has three main subunits: a(1), b(2) and c(10-14). The alpha and beta chains form an alternating ring which encloses part of the gamma chain. F(1) is attached to F(0) by a central stalk formed by the gamma and epsilon chains, while a peripheral stalk is formed by the delta and b chains.

Its subcellular location is the cell inner membrane. In terms of biological role, f(1)F(0) ATP synthase produces ATP from ADP in the presence of a proton or sodium gradient. F-type ATPases consist of two structural domains, F(1) containing the extramembraneous catalytic core and F(0) containing the membrane proton channel, linked together by a central stalk and a peripheral stalk. During catalysis, ATP synthesis in the catalytic domain of F(1) is coupled via a rotary mechanism of the central stalk subunits to proton translocation. Component of the F(0) channel, it forms part of the peripheral stalk, linking F(1) to F(0). The chain is ATP synthase subunit b from Ruegeria pomeroyi (strain ATCC 700808 / DSM 15171 / DSS-3) (Silicibacter pomeroyi).